A 910-amino-acid chain; its full sequence is Coatomer subunit beta'-2 (910 aa).

WD repeat units lie at residues 13–52, 55–94, 97–136, 140–180, 183–224, 227–266, 269–309, 351–393, and 461–501; these read QRSERVKSVDLHPTEPWILSSLYSGSVCIWNYQTQTMVKS, VTELPVRSSKFIARKQWIVAGADDMFIRVYNYNTMDKVKV, AHTDYIRCVAVHPTQPFVLSSSDDMLIKLWDWDKGWMCTQ, GHSH…PNFT, GHSK…CVQT, GHAHNVSAVCFHPELPITLTGSEDGTVRLWHSTTYRLENT, YGLE…ASMD, TCDL…GSAL, and RIDV…SHLD. Residues 882-910 form a disordered region; the sequence is ADGSTDGAVLVNGNDTEEQWGTNNEESSA. Positions 900 to 910 are enriched in polar residues; the sequence is QWGTNNEESSA.

Belongs to the WD repeat COPB2 family. As to quaternary structure, oligomeric complex that consists of at least the alpha, beta, beta', gamma, delta, epsilon and zeta subunits.

It is found in the cytoplasm. The protein resides in the golgi apparatus membrane. The protein localises to the cytoplasmic vesicle. Its subcellular location is the COPI-coated vesicle membrane. In terms of biological role, the coatomer is a cytosolic protein complex that binds to dilysine motifs and reversibly associates with Golgi non-clathrin-coated vesicles, which further mediate biosynthetic protein transport from the ER, via the Golgi up to the trans Golgi network. Coatomer complex is required for budding from Golgi membranes, and is essential for the retrograde Golgi-to-ER transport of dilysine-tagged proteins. This is Coatomer subunit beta'-2 from Oryza sativa subsp. japonica (Rice).